The chain runs to 567 residues: Phosphoglucomutase-like protein 5 (567 aa).

The tract at residues 1-26 is disordered; it reads MEGSPIPVLTVPTAPYEDQRPAGGGG. T120 carries the phosphothreonine modification. S122 bears the Phosphoserine mark.

The protein belongs to the phosphohexose mutase family. As to quaternary structure, interacts with DMD/dystrophin; the interaction is direct. Interacts with UTRN/utrophin. Detected in smooth and cardiac muscle at high levels and in skeletal muscle at low level. Present in other tissues due to vascular or other smooth muscle component. Low levels are present in liver, kidney, skin and brain (at protein level).

It localises to the cell junction. Its subcellular location is the adherens junction. It is found in the cytoplasm. The protein resides in the cytoskeleton. The protein localises to the cell membrane. It localises to the sarcolemma. In terms of biological role, component of adherens-type cell-cell and cell-matrix junctions. Has no phosphoglucomutase activity in vitro. The polypeptide is Phosphoglucomutase-like protein 5 (Homo sapiens (Human)).